The sequence spans 211 residues: MSLSDIQQAILSLITNHINADGVSPSQTEIARAFGFKGVRAVQHHLDVLEQQGMIRRVPRQARGIRLKHLTEVDETALALQSEDVLRLPVLGRVAAGQPIGADIGEGRVVLLDRVFFSPAPDYLLRVQGDSMRDEGIFDGDLIGVHRTQDAHSGQIVVARIDDEITVKLLKISKDRIRLLPRNPDFAPIEVRSDQDFAIEGLYCGLLRPNR.

A DNA-binding region (H-T-H motif) is located at residues 27 to 47 (QTEIARAFGFKGVRAVQHHLD). Residues Ser131 and Lys168 each act as for autocatalytic cleavage activity in the active site.

Belongs to the peptidase S24 family. In terms of assembly, homodimer.

It carries out the reaction Hydrolysis of Ala-|-Gly bond in repressor LexA.. Represses a number of genes involved in the response to DNA damage (SOS response), including recA and lexA. In the presence of single-stranded DNA, RecA interacts with LexA causing an autocatalytic cleavage which disrupts the DNA-binding part of LexA, leading to derepression of the SOS regulon and eventually DNA repair. In Xylella fastidiosa (strain 9a5c), this protein is LexA repressor.